Consider the following 360-residue polypeptide: DNA replication and repair protein RecF (360 aa).

30 to 37 (GNNGSGKT) provides a ligand contact to ATP.

The protein belongs to the RecF family.

It is found in the cytoplasm. In terms of biological role, the RecF protein is involved in DNA metabolism; it is required for DNA replication and normal SOS inducibility. RecF binds preferentially to single-stranded, linear DNA. It also seems to bind ATP. The polypeptide is DNA replication and repair protein RecF (Mannheimia succiniciproducens (strain KCTC 0769BP / MBEL55E)).